A 251-amino-acid polypeptide reads, in one-letter code: UPF0246 protein TM1040_2658 (251 aa).

It belongs to the UPF0246 family.

In Ruegeria sp. (strain TM1040) (Silicibacter sp.), this protein is UPF0246 protein TM1040_2658.